A 354-amino-acid chain; its full sequence is UDP-N-acetylglucosamine--N-acetylmuramyl-(pentapeptide) pyrophosphoryl-undecaprenol N-acetylglucosamine transferase (354 aa).

Residues 15 to 17, N127, R163, S191, I242, 261 to 266, and Q286 each bind UDP-N-acetyl-alpha-D-glucosamine; these read TGG and ALTVSE.

Belongs to the glycosyltransferase 28 family. MurG subfamily.

Its subcellular location is the cell inner membrane. The catalysed reaction is di-trans,octa-cis-undecaprenyl diphospho-N-acetyl-alpha-D-muramoyl-L-alanyl-D-glutamyl-meso-2,6-diaminopimeloyl-D-alanyl-D-alanine + UDP-N-acetyl-alpha-D-glucosamine = di-trans,octa-cis-undecaprenyl diphospho-[N-acetyl-alpha-D-glucosaminyl-(1-&gt;4)]-N-acetyl-alpha-D-muramoyl-L-alanyl-D-glutamyl-meso-2,6-diaminopimeloyl-D-alanyl-D-alanine + UDP + H(+). Its pathway is cell wall biogenesis; peptidoglycan biosynthesis. Functionally, cell wall formation. Catalyzes the transfer of a GlcNAc subunit on undecaprenyl-pyrophosphoryl-MurNAc-pentapeptide (lipid intermediate I) to form undecaprenyl-pyrophosphoryl-MurNAc-(pentapeptide)GlcNAc (lipid intermediate II). This is UDP-N-acetylglucosamine--N-acetylmuramyl-(pentapeptide) pyrophosphoryl-undecaprenol N-acetylglucosamine transferase from Pasteurella multocida (strain Pm70).